The primary structure comprises 525 residues: MSCSSRASSSRAGGSSSARVSAGGSSFSSGSRCGLGGSSAQGFRGGASSCSLSGGSSGAFGGSFGGGFGSCSVGGGFGGASGSGTGFGGGSSFGGVSGFGRGSGFCGSSRFSSGATGGFYSYGGGMGGGVGDGGLFSGGEKQTMQNLNDRLANYLDKVRALEEANTDLENKIKEWYDKYGPGSGDGGSGRDYSKYYSIIEDLRNQIIAATVENAGIILHIDNARLAADDFRLKYENELCLRQSVEADINGLRKVLDDLTMTRSDLEMQIESFTEELAYLRKNHEEEMKNMQGSSGGEVTVEMNAAPGTDLTKLLNDMRAQYEELAEQNRREAEERFNKQSASLQAQISTDAGAATSAKNEITELKRTLQALEIELQSQLAMKSSLEGTLADTEAGYVAQLSEIQTQISALEEEICQIWGETKCQNAEYKQLLDIKTRLEVEIETYRRLLDGEGGGSSFAEFGGRNSGSVNMGSRDLVSGDSRSGSCSGQGRDSSKTRVTKTIVEELVDGKVVSSQVSSISEVKVK.

The interval 1-30 (MSCSSRASSSRAGGSSSARVSAGGSSFSSG) is disordered. The head stretch occupies residues 1 to 139 (MSCSSRASSS…VGDGGLFSGG (139 aa)). The coil 1A stretch occupies residues 140–175 (EKQTMQNLNDRLANYLDKVRALEEANTDLENKIKEW). Residues 140 to 456 (EKQTMQNLND…RLLDGEGGGS (317 aa)) enclose the IF rod domain. Residues 176–198 (YDKYGPGSGDGGSGRDYSKYYSI) are linker 1. Positions 199-290 (IEDLRNQIIA…KNHEEEMKNM (92 aa)) are coil 1B. The interval 291–313 (QGSSGGEVTVEMNAAPGTDLTKL) is linker 12. The segment at 314–452 (LNDMRAQYEE…ETYRRLLDGE (139 aa)) is coil 2. Positions 453 to 525 (GGGSSFAEFG…VSSISEVKVK (73 aa)) are tail. A disordered region spans residues 459 to 497 (AEFGGRNSGSVNMGSRDLVSGDSRSGSCSGQGRDSSKTR). A compositionally biased stretch (polar residues) spans 480-491 (DSRSGSCSGQGR).

The protein belongs to the intermediate filament family. Heterotetramer of two type I and two type II keratins. As to expression, highly expressed in keratinocytes, placenta, colon and spleen. Expressed at lower level in thymus and testis.

The protein is Keratin, type I cytoskeletal 24 (KRT24) of Homo sapiens (Human).